A 481-amino-acid chain; its full sequence is Betaine aldehyde dehydrogenase 2 (481 aa).

The K(+) site is built by S29 and D96. 152-154 is an NAD(+) binding site; that stretch reads GAW. The active-site Charge relay system is the K164. 178 to 181 serves as a coordination point for NAD(+); it reads KPSE. Residue V182 participates in K(+) binding. 231-234 is a binding site for NAD(+); that stretch reads SVKT. I246 provides a ligand contact to K(+). Residue E252 is the Proton acceptor of the active site. Residues G254, C286, and E383 each contribute to the NAD(+) site. The active-site Nucleophile is C286. The residue at position 286 (C286) is a Cysteine sulfenic acid (-SOH). K(+)-binding residues include K453 and G456. The active-site Charge relay system is E460.

It belongs to the aldehyde dehydrogenase family. As to quaternary structure, dimer of dimers. It depends on K(+) as a cofactor.

The enzyme catalyses betaine aldehyde + NAD(+) + H2O = glycine betaine + NADH + 2 H(+). The protein operates within amine and polyamine biosynthesis; betaine biosynthesis via choline pathway; betaine from betaine aldehyde: step 1/1. Its function is as follows. Involved in the biosynthesis of the osmoprotectant glycine betaine. Catalyzes the irreversible oxidation of betaine aldehyde to the corresponding acid. This Rhizobium meliloti (strain 1021) (Ensifer meliloti) protein is Betaine aldehyde dehydrogenase 2.